The sequence spans 273 residues: NH(3)-dependent NAD(+) synthetase (273 aa).

46–53 (GISGGQDS) lines the ATP pocket. D52 is a binding site for Mg(2+). R139 contributes to the deamido-NAD(+) binding site. Position 159 (T159) interacts with ATP. Position 164 (E164) interacts with Mg(2+). Residues K172 and D179 each contribute to the deamido-NAD(+) site. ATP-binding residues include K188 and T210. 259–260 (HK) provides a ligand contact to deamido-NAD(+).

It belongs to the NAD synthetase family. In terms of assembly, homodimer.

The catalysed reaction is deamido-NAD(+) + NH4(+) + ATP = AMP + diphosphate + NAD(+) + H(+). Its pathway is cofactor biosynthesis; NAD(+) biosynthesis; NAD(+) from deamido-NAD(+) (ammonia route): step 1/1. Its function is as follows. Catalyzes the ATP-dependent amidation of deamido-NAD to form NAD. Uses ammonia as a nitrogen source. The sequence is that of NH(3)-dependent NAD(+) synthetase from Streptococcus agalactiae serotype Ia (strain ATCC 27591 / A909 / CDC SS700).